The sequence spans 355 residues: Methionine import ATP-binding protein MetN (355 aa).

The 243-residue stretch at 8 to 250 (LKNIDITFTQ…PQEDLTQEFI (243 aa)) folds into the ABC transporter domain. Residue 42–49 (GYSGAGKS) participates in ATP binding.

The protein belongs to the ABC transporter superfamily. Methionine importer (TC 3.A.1.24) family. The complex is composed of two ATP-binding proteins (MetN), two transmembrane proteins (MetI) and a solute-binding protein (MetQ).

It is found in the cell membrane. It carries out the reaction L-methionine(out) + ATP + H2O = L-methionine(in) + ADP + phosphate + H(+). The enzyme catalyses D-methionine(out) + ATP + H2O = D-methionine(in) + ADP + phosphate + H(+). Part of the ABC transporter complex MetNIQ involved in methionine import. Responsible for energy coupling to the transport system. This is Methionine import ATP-binding protein MetN from Streptococcus thermophilus (strain CNRZ 1066).